We begin with the raw amino-acid sequence, 690 residues long: Glutaminase A (690 aa).

An N-terminal signal peptide occupies residues 1-20; the sequence is MMHFLSFCLSVASLVSYAGA. Asparagine 80, asparagine 96, asparagine 435, asparagine 508, asparagine 528, asparagine 538, and asparagine 571 each carry an N-linked (GlcNAc...) asparagine glycan.

The protein belongs to the fungal glutaminase gtaA family.

It localises to the secreted. The enzyme catalyses L-glutamine + H2O = L-glutamate + NH4(+). With respect to regulation, activity is inhibited by about 80% in the presence of 18% sodium chloride. Its function is as follows. Glutaminase catalyzes the hydrolysis of glutamine to glutamic acid and plays a key role in nitrogen metabolism. Catalyzes the hydrolysis not only of L-glutamine but also of D-glutamine. The chain is Glutaminase A from Aspergillus oryzae (strain ATCC 42149 / RIB 40) (Yellow koji mold).